Consider the following 121-residue polypeptide: Putative iron-sulfur cluster insertion protein ErpA (121 aa).

3 residues coordinate iron-sulfur cluster: Cys49, Cys113, and Cys115.

The protein belongs to the HesB/IscA family. In terms of assembly, homodimer. It depends on iron-sulfur cluster as a cofactor.

Its function is as follows. Required for insertion of 4Fe-4S clusters. This chain is Putative iron-sulfur cluster insertion protein ErpA, found in Nitrosomonas eutropha (strain DSM 101675 / C91 / Nm57).